We begin with the raw amino-acid sequence, 543 residues long: CTP synthase (543 aa).

The segment at 1 to 265 (MARYIFITGG…DDEVLAAFGI (265 aa)) is amidoligase domain. Serine 13 lines the CTP pocket. Serine 13 is a binding site for UTP. 14–19 (SLGKGL) is an ATP binding site. Tyrosine 54 contributes to the L-glutamine binding site. ATP is bound at residue aspartate 71. Residues aspartate 71 and glutamate 139 each contribute to the Mg(2+) site. CTP contacts are provided by residues 146–148 (DIE), 186–191 (KTKPTQ), and lysine 222. UTP is bound by residues 186–191 (KTKPTQ) and lysine 222. Residue 238–240 (RDV) coordinates ATP. Residues 291 to 542 (TIAIVGKYTG…VQAAVVQSRL (252 aa)) form the Glutamine amidotransferase type-1 domain. Glycine 353 contacts L-glutamine. Cysteine 380 functions as the Nucleophile; for glutamine hydrolysis in the catalytic mechanism. Residues 381 to 384 (FGMQ), glutamate 404, and arginine 470 each bind L-glutamine. Active-site residues include histidine 515 and glutamate 517.

The protein belongs to the CTP synthase family. In terms of assembly, homotetramer.

It carries out the reaction UTP + L-glutamine + ATP + H2O = CTP + L-glutamate + ADP + phosphate + 2 H(+). The catalysed reaction is L-glutamine + H2O = L-glutamate + NH4(+). The enzyme catalyses UTP + NH4(+) + ATP = CTP + ADP + phosphate + 2 H(+). It functions in the pathway pyrimidine metabolism; CTP biosynthesis via de novo pathway; CTP from UDP: step 2/2. With respect to regulation, allosterically activated by GTP, when glutamine is the substrate; GTP has no effect on the reaction when ammonia is the substrate. The allosteric effector GTP functions by stabilizing the protein conformation that binds the tetrahedral intermediate(s) formed during glutamine hydrolysis. Inhibited by the product CTP, via allosteric rather than competitive inhibition. Its function is as follows. Catalyzes the ATP-dependent amination of UTP to CTP with either L-glutamine or ammonia as the source of nitrogen. Regulates intracellular CTP levels through interactions with the four ribonucleotide triphosphates. The polypeptide is CTP synthase (Rhodopseudomonas palustris (strain BisB18)).